Here is a 386-residue protein sequence, read N- to C-terminus: Ethanolamine kinase 2 (386 aa).

This sequence belongs to the choline/ethanolamine kinase family. As to expression, expressed in kidney, liver, ovary, testis and prostate.

It carries out the reaction ethanolamine + ATP = phosphoethanolamine + ADP + H(+). Its pathway is phospholipid metabolism; phosphatidylethanolamine biosynthesis; phosphatidylethanolamine from ethanolamine: step 1/3. Highly specific for ethanolamine phosphorylation. Does not have choline kinase activity. This is Ethanolamine kinase 2 (ETNK2) from Homo sapiens (Human).